An 891-amino-acid polypeptide reads, in one-letter code: Aconitate hydratase A (891 aa).

Residues Cys435, Cys501, and Cys504 each contribute to the [4Fe-4S] cluster site.

It belongs to the aconitase/IPM isomerase family. Monomer. It depends on [4Fe-4S] cluster as a cofactor.

It carries out the reaction citrate = D-threo-isocitrate. The catalysed reaction is (2S,3R)-3-hydroxybutane-1,2,3-tricarboxylate = 2-methyl-cis-aconitate + H2O. It functions in the pathway carbohydrate metabolism; tricarboxylic acid cycle; isocitrate from oxaloacetate: step 2/2. The protein operates within organic acid metabolism; propanoate degradation. Functionally, involved in the catabolism of short chain fatty acids (SCFA) via the tricarboxylic acid (TCA)(acetyl degradation route) and probably the 2-methylcitrate cycle I (propionate degradation route). Catalyzes the reversible isomerization of citrate to isocitrate via cis-aconitate. The apo form of AcnA functions as a RNA-binding regulatory protein. Could catalyze the hydration of 2-methyl-cis-aconitate to yield (2R,3S)-2-methylisocitrate. The sequence is that of Aconitate hydratase A (acn) from Legionella pneumophila subsp. pneumophila (strain Philadelphia 1 / ATCC 33152 / DSM 7513).